The following is a 235-amino-acid chain: MAVYDTIILDIEGTVCSISFVKNVLFPYFLDKLPFLLEQVEFPLDHTDNVTVTQILAKFPERYTKSKECLKTYINELVANDIKDPTLKQLQGIVWQAGYEEGEIVVDLYNDVIEALDRWKKEDKSVYIYSSGSIKAQKLLFSHVKFKSETRDLTNYIKGYYDPTSVGSKIESESYLNILKDLNKDPESAIFLSDNIKEVAASIRAGIKSLVVKRPGNTVHHDNQSFDFVYSFDNV.

Positions 10 and 12 each coordinate Mg(2+). Residues 130-131 and K169 contribute to the substrate site; that span reads SS. Residue D194 coordinates Mg(2+).

It belongs to the HAD-like hydrolase superfamily. MasA/MtnC family. In terms of assembly, monomer. Mg(2+) is required as a cofactor.

It is found in the cytoplasm. The protein localises to the nucleus. It carries out the reaction 5-methylsulfanyl-2,3-dioxopentyl phosphate + H2O = 1,2-dihydroxy-5-(methylsulfanyl)pent-1-en-3-one + phosphate. The protein operates within amino-acid biosynthesis; L-methionine biosynthesis via salvage pathway; L-methionine from S-methyl-5-thio-alpha-D-ribose 1-phosphate: step 3/6. It participates in amino-acid biosynthesis; L-methionine biosynthesis via salvage pathway; L-methionine from S-methyl-5-thio-alpha-D-ribose 1-phosphate: step 4/6. In terms of biological role, bifunctional enzyme that catalyzes the enolization of 2,3-diketo-5-methylthiopentyl-1-phosphate (DK-MTP-1-P) into the intermediate 2-hydroxy-3-keto-5-methylthiopentenyl-1-phosphate (HK-MTPenyl-1-P), which is then dephosphorylated to form the acireductone 1,2-dihydroxy-3-keto-5-methylthiopentene (DHK-MTPene). This Komagataella phaffii (strain GS115 / ATCC 20864) (Yeast) protein is Enolase-phosphatase E1.